A 501-amino-acid polypeptide reads, in one-letter code: ATP synthase subunit alpha (501 aa).

Residue 170–177 coordinates ATP; it reads GDRQTGKS.

It belongs to the ATPase alpha/beta chains family. F-type ATPases have 2 components, CF(1) - the catalytic core - and CF(0) - the membrane proton channel. CF(1) has five subunits: alpha(3), beta(3), gamma(1), delta(1), epsilon(1). CF(0) has three main subunits: a(1), b(2) and c(9-12). The alpha and beta chains form an alternating ring which encloses part of the gamma chain. CF(1) is attached to CF(0) by a central stalk formed by the gamma and epsilon chains, while a peripheral stalk is formed by the delta and b chains.

The protein resides in the cell membrane. It carries out the reaction ATP + H2O + 4 H(+)(in) = ADP + phosphate + 5 H(+)(out). Functionally, produces ATP from ADP in the presence of a proton gradient across the membrane. The alpha chain is a regulatory subunit. The chain is ATP synthase subunit alpha from Acholeplasma laidlawii (strain PG-8A).